We begin with the raw amino-acid sequence, 154 residues long: Nuclear cap-binding protein subunit 2 (154 aa).

MRNA is bound by residues Tyr-10, Tyr-33, 102–106, 113–117, and 123–124; these read RCDWD, RQYGR, and QV. An RRM domain is found at 30–108; that stretch reads STLYMGNLSF…RIIRCDWDAG (79 aa).

It belongs to the RRM NCBP2 family. Component of the nuclear cap-binding complex (CBC), a heterodimer composed of Cbp80 and Cbp20 that interacts with m7GpppG-capped RNA.

The protein resides in the nucleus. Functionally, component of the cap-binding complex (CBC), which binds co-transcriptionally to the 5' cap of pre-mRNAs and is involved in various processes such as pre-mRNA splicing and RNA-mediated gene silencing (RNAi). The CBC complex is involved in miRNA-mediated RNA interference and is required for primary microRNAs (miRNAs) processing. Also involved in innate immunity via the short interfering RNAs (siRNAs) processing machinery by restricting the viral RNA production. In the CBC complex, Cbp20 recognizes and binds capped RNAs (m7GpppG-capped RNA) but requires Cbp80 to stabilize the movement of its N-terminal loop and lock the CBC into a high affinity cap-binding state with the cap structure. The protein is Nuclear cap-binding protein subunit 2 of Bombyx mori (Silk moth).